A 476-amino-acid chain; its full sequence is Adenosylhomocysteinase (476 aa).

The substrate site is built by Thr67, Asp142, and Glu202. Residue 203–205 (TTT) participates in NAD(+) binding. Residues Lys232 and Asp236 each contribute to the substrate site. NAD(+)-binding positions include Asn237, 266–271 (GYGDVG), Glu289, Asn324, 345–347 (IGH), and Asn390.

The protein belongs to the adenosylhomocysteinase family. The cofactor is NAD(+).

It is found in the cytoplasm. The catalysed reaction is S-adenosyl-L-homocysteine + H2O = L-homocysteine + adenosine. It participates in amino-acid biosynthesis; L-homocysteine biosynthesis; L-homocysteine from S-adenosyl-L-homocysteine: step 1/1. Its function is as follows. May play a key role in the regulation of the intracellular concentration of adenosylhomocysteine. This is Adenosylhomocysteinase from Parasynechococcus marenigrum (strain WH8102).